A 277-amino-acid polypeptide reads, in one-letter code: B3 domain-containing protein At3g19184 (277 aa).

Residues 33 to 94 (QSLRVSSSSS…LERRPRRSSR (62 aa)) form a disordered region. The TF-B3 DNA-binding region spans 130 to 221 (FTKPMLQSHV…TFKVYIIRVN (92 aa)). Over residues 224 to 250 (ANNDSDGNEVNDDDSDGNEEDRDNDNE) the composition is skewed to acidic residues. The interval 224–277 (ANNDSDGNEVNDDDSDGNEEDRDNDNESNEKQKETVSEGRQLRSSGKRKRRGRK) is disordered. The segment covering 251–264 (SNEKQKETVSEGRQ) has biased composition (basic and acidic residues). Over residues 268–277 (SGKRKRRGRK) the composition is skewed to basic residues.

The protein localises to the nucleus. The chain is B3 domain-containing protein At3g19184 from Arabidopsis thaliana (Mouse-ear cress).